Consider the following 221-residue polypeptide: MSQLKYILDIEGTVCPISFVKDTLYPFFLKQVESLVKTNDPTLQNLLAQFPVPQDASSLHEHIESLVNNDIKDSVLKQLQGYIWEQGYKSGEIKAPVYPDAIDFIQRHAPNVYIYSSGSVKAQILLFQHVEGDIDLTKSIAGYFDINTSGKKTEPQSYTNILKSIGVPPSSASDVVFISDNDKELDAALDVGISTILALRPGNNPVSNAEKYKALNNFSSI.

Mg(2+)-binding residues include D9 and E11. Residues 116-117 (SS) and K152 contribute to the substrate site. D180 provides a ligand contact to Mg(2+).

This sequence belongs to the HAD-like hydrolase superfamily. MasA/MtnC family. As to quaternary structure, monomer. Requires Mg(2+) as cofactor.

The protein localises to the cytoplasm. It localises to the nucleus. It catalyses the reaction 5-methylsulfanyl-2,3-dioxopentyl phosphate + H2O = 1,2-dihydroxy-5-(methylsulfanyl)pent-1-en-3-one + phosphate. It participates in amino-acid biosynthesis; L-methionine biosynthesis via salvage pathway; L-methionine from S-methyl-5-thio-alpha-D-ribose 1-phosphate: step 3/6. The protein operates within amino-acid biosynthesis; L-methionine biosynthesis via salvage pathway; L-methionine from S-methyl-5-thio-alpha-D-ribose 1-phosphate: step 4/6. Functionally, bifunctional enzyme that catalyzes the enolization of 2,3-diketo-5-methylthiopentyl-1-phosphate (DK-MTP-1-P) into the intermediate 2-hydroxy-3-keto-5-methylthiopentenyl-1-phosphate (HK-MTPenyl-1-P), which is then dephosphorylated to form the acireductone 1,2-dihydroxy-3-keto-5-methylthiopentene (DHK-MTPene). In Kluyveromyces lactis (strain ATCC 8585 / CBS 2359 / DSM 70799 / NBRC 1267 / NRRL Y-1140 / WM37) (Yeast), this protein is Enolase-phosphatase E1.